The sequence spans 254 residues: MLLVIDVGNSNIVLGICDGTQLVRNWRISTDKSRTSDEYGVLLHSLFASAGLGFDTVDAAIISSVVPPLTGVMEAICRDFFHLTPFVVGPGIKTGMPILYDNPREVGADRIVNAVAGYEKHKCSLVIVDFGTATTFDYVNARGEYCGGAIAPGLAISLEALFQRASKLPRVDIARPPQIIARNTVNSMQAGIFYGYVGLVDEIVNRIVAESKDTPRVIATGGLAKLIAPESRTIVEVDDFLTLDGLKILYERNR.

6-13 provides a ligand contact to ATP; sequence DVGNSNIV. Residues Tyr100 and 107–110 contribute to the substrate site; that span reads GADR. Asp109 acts as the Proton acceptor in catalysis. K(+) is bound at residue Asp129. Thr132 contacts ATP. A substrate-binding site is contributed by Thr184.

It belongs to the type III pantothenate kinase family. In terms of assembly, homodimer. Requires NH4(+) as cofactor. K(+) is required as a cofactor.

The protein resides in the cytoplasm. It catalyses the reaction (R)-pantothenate + ATP = (R)-4'-phosphopantothenate + ADP + H(+). The protein operates within cofactor biosynthesis; coenzyme A biosynthesis; CoA from (R)-pantothenate: step 1/5. In terms of biological role, catalyzes the phosphorylation of pantothenate (Pan), the first step in CoA biosynthesis. This is Type III pantothenate kinase from Pelobacter propionicus (strain DSM 2379 / NBRC 103807 / OttBd1).